The sequence spans 164 residues: MAVVTLIPTLARVLSKHSLLSPLLSVTSFRRFYRGDSPTDSQKDMIEIPLPPWQERTDESIETKRARLLYESRKRGMLENCILLSLFAKEYLHNMTEKQLNLYDRLINEPSNDWDIYYWATEAKPAPEIFENEVMELLREFTKNKNKEQRLRAPDLEYLFEKPR.

Residues 1-27 constitute a mitochondrion transit peptide; it reads MAVVTLIPTLARVLSKHSLLSPLLSVT.

It belongs to the SDHAF2 family. In terms of assembly, interacts with SDHA within the SDH catalytic dimer.

It is found in the mitochondrion matrix. Its function is as follows. Plays an essential role in the assembly of succinate dehydrogenase (SDH), an enzyme complex (also referred to as respiratory complex II) that is a component of both the tricarboxylic acid (TCA) cycle and the mitochondrial electron transport chain, and which couples the oxidation of succinate to fumarate with the reduction of ubiquinone (coenzyme Q) to ubiquinol. Required for flavinylation (covalent attachment of FAD) of the flavoprotein subunit SDHA of the SDH catalytic dimer. The protein is Succinate dehydrogenase assembly factor 2, mitochondrial of Rattus norvegicus (Rat).